We begin with the raw amino-acid sequence, 259 residues long: Putative zinc metalloprotease Rip2 (259 aa).

2 consecutive transmembrane segments (helical) span residues 14–34 (PIFLGLLGLTAVGGALAWLAG) and 39–59 (PLAYAGVFVMVIAGWLVSLCL). Position 60 (H60) interacts with Zn(2+). Residue E61 is part of the active site. H64 is a Zn(2+) binding site. Transmembrane regions (helical) follow at residues 97–117 (GLPMLFIALGGIGLPGAAVYV), 128–148 (TLVSLAGPTVNLALAMLLLAA), 156–176 (IHAVLWAGVAFLAFLQLTALV), and 211–231 (LVFLLVLFLAPTLNGWFFGVV).

This sequence belongs to the peptidase M50B family. Requires Zn(2+) as cofactor.

It is found in the cell membrane. The sequence is that of Putative zinc metalloprotease Rip2 (rip2) from Mycobacterium tuberculosis (strain ATCC 25618 / H37Rv).